A 161-amino-acid chain; its full sequence is Large ribosomal subunit protein uL15 (161 aa).

The segment at 1–39 is disordered; it reads MTKLNELAPREGSTKGRMRVGRGPGSGKGKTAGRGVKGQ. The segment covering 22–36 has biased composition (gly residues); that stretch reads RGPGSGKGKTAGRGV.

Belongs to the universal ribosomal protein uL15 family. In terms of assembly, part of the 50S ribosomal subunit.

Binds to the 23S rRNA. The protein is Large ribosomal subunit protein uL15 of Caulobacter vibrioides (strain ATCC 19089 / CIP 103742 / CB 15) (Caulobacter crescentus).